We begin with the raw amino-acid sequence, 481 residues long: Glutamate--tRNA ligase (481 aa).

Residues 11–21 (PSPTGLLHIGN) carry the 'HIGH' region motif. The short motif at 255–259 (KLSKR) is the 'KMSKS' region element. Lysine 258 provides a ligand contact to ATP.

This sequence belongs to the class-I aminoacyl-tRNA synthetase family. Glutamate--tRNA ligase type 1 subfamily. In terms of assembly, monomer.

It localises to the cytoplasm. The enzyme catalyses tRNA(Glu) + L-glutamate + ATP = L-glutamyl-tRNA(Glu) + AMP + diphosphate. Its function is as follows. Catalyzes the attachment of glutamate to tRNA(Glu) in a two-step reaction: glutamate is first activated by ATP to form Glu-AMP and then transferred to the acceptor end of tRNA(Glu). The chain is Glutamate--tRNA ligase from Streptococcus pyogenes serotype M3 (strain ATCC BAA-595 / MGAS315).